The following is a 435-amino-acid chain: MRVLILGSGVIGTTSAWYLSKAGCEVVVVDRQSGAGLETSYANGGQLSFGYTSPWAAPGVPLKAVRWLFERHAPLSIRPTTDWNQYVWLARMLRHCSAERYAVNKSRMLRLSEYSREALEALSAETGITFEGRRLGTIQLFRTQQQLDGAVRDIELLTQYGIPYEVLSPHQLAKFEPGLADGSVRFVGALRLPHDQTGDCCLFTQRLAALAAKRGVEFRYGCTVQRLEVDGPRVTGAWINGALERADCCVVALGSYSPLLLAPLGLRLPVYPLKGFSLTLPMIDASRAPVSTVLDESYKVAVTRFDERIRVAGMAEVSGYDVSLNPRRRSTLEMVVQDVYPGCGDLGRGEFWTGLRPATPDGTPVIGATPYQGLFLNTGHGTLGWTMSSGSGRYLADLICCRPCEISSEGLDMFRYLVSTIPCPQECAPCVPPTP.

Val-3–Trp-17 provides a ligand contact to FAD.

It belongs to the DadA oxidoreductase family. It depends on FAD as a cofactor.

It carries out the reaction a D-alpha-amino acid + A + H2O = a 2-oxocarboxylate + AH2 + NH4(+). It functions in the pathway amino-acid degradation; D-alanine degradation; NH(3) and pyruvate from D-alanine: step 1/1. Oxidative deamination of D-amino acids. The protein is D-amino acid dehydrogenase of Xylella fastidiosa (strain M23).